The chain runs to 128 residues: MYDNLKNLGIQHPEDIDRYTLRQEANNDILKIYFRKDKGEFFAKSVKFKYPRQRKTISDTQSGQGFKEVNEINTNLRYVIEELDQICQQDQVEVDLKHKILDDLRHLEHVVANKIAEIEADLEKLTRR.

This sequence belongs to the UPF0325 family.

This Proteus mirabilis (strain HI4320) protein is UPF0325 protein PMI2289.